The chain runs to 139 residues: MALSPKRVKYRKVQRGRVKGDATRCNAVDFGAYALVCLEPFWLTSRQIEAARVALNRRIKRGGKLWIRVFPDKPYSKKPAETRMGKGKGSPEYWVAVVKPGTVLFELMGVERALAEQAMLLAGSKLPIKTRFAERVQEI.

The protein belongs to the universal ribosomal protein uL16 family. As to quaternary structure, part of the 50S ribosomal subunit.

Binds 23S rRNA and is also seen to make contacts with the A and possibly P site tRNAs. The sequence is that of Large ribosomal subunit protein uL16 from Treponema pallidum (strain Nichols).